Reading from the N-terminus, the 710-residue chain is Adenylosuccinate synthetase (710 aa).

The tract at residues 1–54 (MPVRRYGGRYNSSSPGVSNALNPSRTAGWPLSPSPATGSKPASTHHDPVPQEAY) is disordered. Polar residues predominate over residues 10–25 (YNSSSPGVSNALNPSR). A compositionally biased stretch (basic and acidic residues) spans 44-54 (THHDPVPQEAY). GTP-binding positions include 180-186 (GDEGKGK) and 210-212 (GHT). D181 acts as the Proton acceptor in catalysis. Residues D181 and G210 each contribute to the Mg(2+) site. IMP contacts are provided by residues 181 to 184 (DEGK), 208 to 211 (NAGH), T295, K309, Q421, T437, and K567. Catalysis depends on H211, which acts as the Proton donor. 563 to 569 (AVTKKPR) serves as a coordination point for substrate. GTP contacts are provided by residues R569 and 697 to 699 (GNG).

The protein belongs to the adenylosuccinate synthetase family. Homodimer. The cofactor is Mg(2+).

Its subcellular location is the cytoplasm. It carries out the reaction IMP + L-aspartate + GTP = N(6)-(1,2-dicarboxyethyl)-AMP + GDP + phosphate + 2 H(+). The protein operates within purine metabolism; AMP biosynthesis via de novo pathway; AMP from IMP: step 1/2. Functionally, plays an important role in the salvage pathway for purine nucleotide biosynthesis. Catalyzes the first committed step in the biosynthesis of AMP from IMP. This chain is Adenylosuccinate synthetase, found in Leishmania major.